The following is a 328-amino-acid chain: 2-oxoglutarate-dependent dioxygenase gloF (328 aa).

A Fe2OG dioxygenase domain is found at 175 to 289 (DTSELRMNHY…RYSVAYFGKP (115 aa)). Residues histidine 201, aspartate 203, and histidine 261 each coordinate Fe cation. Arginine 280 lines the 2-oxoglutarate pocket.

It belongs to the iron/ascorbate-dependent oxidoreductase family. Fe(2+) serves as cofactor.

It participates in mycotoxin biosynthesis. 2-oxoglutarate-dependent dioxygenase; part of the gene cluster that mediates the biosynthesis of pneumocandins, lipohexapeptides of the echinocandin family that prevent fungal cell wall formation by non-competitive inhibition of beta-1,3-glucan synthase. The 10,12-dimethylmyristoyl side chain is synthesized by the reducing polyketide synthase gloL/GLPKS4. The thioesterase gloN/GLHYD exclusively interacts with gloL/GLPKS4 to maintain turnover of the polyketide side chain. The 10R,12S-dimethylmyristic acid is then transferred to the first thiolation domain of the nonribosomal peptide synthetase gloA/GLNRPS4 by the acyl-AMP ligase gloD/GLligase, followed by its acylation to L-ornithine to trigger elongation of the cyclic hexapeptide. L-ornithine, 4R-hydroxyl-L-proline (generated from L-proline by the dioxygenase gloF/GLOXY2), 3S-hydroxyl-L-homotyrosine (generated by gloG/GLHtyB, gloH/GLHtyA, gloI/GLHtyC, gloJ/GLHtyD and hydroxylated at C-3 by the dioxygenase gloM/GLOXY1), 3R-hydroxyl-L-glutamine (generated from L-glutamine probably by the dioxygenase gloE/GLOXY3) and 3S-hydroxyl-L-proline (generated from L-proline by the dioxygenase gloF/GLOXY2 to yield pneumocandin B0), or 3S-hydroxyl-4S-methyl-L-proline (generated from L-leucine by the dioxygenase gloC/GLOXY4 to yield pneumocandin A0) are sequentially added to the growing chain. The last C domain of gloA/GLNRPS4 is proposed to be responsible for cyclization by condensation to form the peptide bond between L-ornithine and 3S-hydroxyl-4S-methyl-L-proline (for pneumocandin A0) or 3S-hydroxyl-L-proline (for pneumocandin B0). Finally, the subsequent C-4 hydroxylation of 3S-hydroxyl-L-homotyrosine and L-ornithine dihydroxylation at C-4 and C-5 are performed by the cytochrome P450 monooxygenases gloP/GLP450-1 and gloO/GLP450-2, respectively. This Glarea lozoyensis (strain ATCC 20868 / MF5171) protein is 2-oxoglutarate-dependent dioxygenase gloF.